The sequence spans 427 residues: MAIYAVVGTQWGDEGKGKIIDFLSSKIDYVVRFNGGNNAGHTIVVNDKKFIFNLLPSGVLQGAKCILGPSVVIDPLILIQELEVLKNNNIKTEIFISDKAHIIMPYHIKFDELSEQKKGIHKIGTTKKGIGPCYADKINRIGIRTIDLLNTEIFANKLKTNLEEKNQIIEKIYNDKPLDYDDILNTYKKYIEILKSLITNTEKILHHAINSEKYILIEGAQGTMLDIEHGTFPFVTSSNTLITAAAGCGIPISKIKQKIGIIKAFSSRVGSGPFVTEISNSIGDIIREKGQEYGSTTKRPRRIGWLDLLTIKKAIALNELNHLALTKLDILNNIESLKICIAYEFQGKIYDYIPTSCETIEKVKPIYKVFKGFKEDISNIKNYDDLPIEAREYIEFIEKEVGIQISILSVGSEREKTIFRNQEWSNI.

GTP-binding positions include 12–18 (GDEGKGK) and 40–42 (GHT). The Proton acceptor role is filled by D13. Mg(2+) contacts are provided by D13 and G40. IMP contacts are provided by residues 13–16 (DEGK), 38–41 (NAGH), T126, R140, Q221, T236, and R299. H41 (proton donor) is an active-site residue. 295-301 (STTKRPR) is a substrate binding site. GTP-binding positions include R301, 327-329 (KLD), and 409-411 (SVG).

The protein belongs to the adenylosuccinate synthetase family. In terms of assembly, homodimer. Mg(2+) serves as cofactor.

It localises to the cytoplasm. The enzyme catalyses IMP + L-aspartate + GTP = N(6)-(1,2-dicarboxyethyl)-AMP + GDP + phosphate + 2 H(+). It participates in purine metabolism; AMP biosynthesis via de novo pathway; AMP from IMP: step 1/2. In terms of biological role, plays an important role in the de novo pathway of purine nucleotide biosynthesis. Catalyzes the first committed step in the biosynthesis of AMP from IMP. This is Adenylosuccinate synthetase from Borrelia recurrentis (strain A1).